The chain runs to 513 residues: Alanine--glyoxylate aminotransferase 2, mitochondrial (513 aa).

A mitochondrion-targeting transit peptide spans 1–40 (MSLAWRNLQKPFYLETSLRILQMRPSLSLGASRIAVPKLT). The residue at position 56 (lysine 56) is an N6-acetyllysine. The residue at position 70 (lysine 70) is an N6-acetyllysine; alternate. Lysine 70 is subject to N6-succinyllysine; alternate. Lysine 83 carries the post-translational modification N6-acetyllysine. Lysine 261 carries the N6-acetyllysine; alternate modification. Residue lysine 261 is modified to N6-succinyllysine; alternate. N6-succinyllysine is present on lysine 303. Lysine 349 carries the post-translational modification N6-(pyridoxal phosphate)lysine. N6-acetyllysine; alternate occurs at positions 416 and 419. An N6-succinyllysine; alternate mark is found at lysine 416 and lysine 419. Lysine 453 is modified (N6-acetyllysine).

It belongs to the class-III pyridoxal-phosphate-dependent aminotransferase family. Homotetramer. Pyridoxal 5'-phosphate serves as cofactor. Expressed in the liver and kidney.

Its subcellular location is the mitochondrion. It carries out the reaction glyoxylate + L-alanine = glycine + pyruvate. It catalyses the reaction (R)-3-amino-2-methylpropanoate + pyruvate = 2-methyl-3-oxopropanoate + L-alanine. The catalysed reaction is 3-oxopropanoate + L-alanine = beta-alanine + pyruvate. The enzyme catalyses 2-oxobutanoate + L-alanine = (2S)-2-aminobutanoate + pyruvate. It carries out the reaction N(omega),N(omega)-dimethyl-L-arginine + pyruvate = 5-(3,3-dimethylguanidino)-2-oxopentanoate + L-alanine. It catalyses the reaction N(omega),N('omega)-dimethyl-L-arginine + pyruvate = 5-(3,3'-dimethylguanidino)-2-oxopentanoate + L-alanine. The catalysed reaction is N(omega),N(omega)-dimethyl-L-arginine + glyoxylate = 5-(3,3-dimethylguanidino)-2-oxopentanoate + glycine. The enzyme catalyses N(omega),N('omega)-dimethyl-L-arginine + glyoxylate = 5-(3,3'-dimethylguanidino)-2-oxopentanoate + glycine. It carries out the reaction N(omega)-methyl-L-arginine + pyruvate = 5-(3-methylguanidino)-2-oxopentanoate + L-alanine. It catalyses the reaction N(omega)-methyl-L-arginine + glyoxylate = 5-(3-methylguanidino)-2-oxopentanoate + glycine. The catalysed reaction is L-ornithine + pyruvate = 5-amino-2-oxopentanoate + L-alanine. The enzyme catalyses L-ornithine + glyoxylate = 5-amino-2-oxopentanoate + glycine. It carries out the reaction (2S)-2-aminobutanoate + glyoxylate = 2-oxobutanoate + glycine. It catalyses the reaction N(omega),N(omega)-dimethyl-L-arginine + oxaloacetate = 5-(3,3-dimethylguanidino)-2-oxopentanoate + L-aspartate. The catalysed reaction is oxaloacetate + L-alanine = L-aspartate + pyruvate. The enzyme catalyses N(omega),N(omega)-dimethyl-L-arginine + 2-oxobutanoate = 5-(3,3-dimethylguanidino)-2-oxopentanoate + (2S)-2-aminobutanoate. It carries out the reaction 2-oxopentanoate + N(omega),N(omega)-dimethyl-L-arginine = 5-(3,3-dimethylguanidino)-2-oxopentanoate + L-2-aminopentanoate. It catalyses the reaction 2-oxohexanoate + N(omega),N(omega)-dimethyl-L-arginine = L-2-aminohexanoate + 5-(3,3-dimethylguanidino)-2-oxopentanoate. With respect to regulation, (R)-3-amino-2-methylpropionate--pyruvate transaminase and beta-alanine-pyruvate aminotransferase are inhibited by aminooxyacetic acid. In terms of biological role, multifunctional aminotransferase with a broad substrate specificity. Catalyzes the conversion of glyoxylate to glycine using alanine as the amino donor. Catalyzes metabolism of not L- but the D-isomer of D-beta-aminoisobutyric acid to generate 2-methyl-3-oxopropanoate and alanine. Catalyzes the transfer of the amino group from beta-alanine to pyruvate to yield L-alanine and 3-oxopropanoate. Can metabolize NG-monomethyl-L-arginine (NMMA), asymmetric NG,NG-dimethyl-L-arginine (ADMA) and symmetric NG,N'G-dimethyl-L-arginine (SDMA). ADMA is a potent inhibitor of nitric-oxide (NO) synthase, and this activity provides mechanism through which the kidney regulates blood pressure. This Mus musculus (Mouse) protein is Alanine--glyoxylate aminotransferase 2, mitochondrial (Agxt2).